The chain runs to 350 residues: Ion-translocating oxidoreductase complex subunit D (350 aa).

The next 4 membrane-spanning stretches (helical) occupy residues 20–40, 42–62, 89–109, and 123–143; these read IMLL…WFFG, GTVL…AAIL, IPPL…VVIA, and PAMI…TSWL. Threonine 187 bears the FMN phosphoryl threonine mark. A run of 5 helical transmembrane segments spans residues 214–234, 242–262, 267–287, 301–321, and 322–342; these read VLAG…GLFL, WHIP…GWLF, LASP…FFIL, LIFG…GGYP, and DGVA…DYYT.

This sequence belongs to the NqrB/RnfD family. The complex is composed of six subunits: RnfA, RnfB, RnfC, RnfD, RnfE and RnfG. It depends on FMN as a cofactor.

The protein resides in the cell inner membrane. In terms of biological role, part of a membrane-bound complex that couples electron transfer with translocation of ions across the membrane. This Klebsiella pneumoniae (strain 342) protein is Ion-translocating oxidoreductase complex subunit D.